Consider the following 166-residue polypeptide: Cyanate hydratase (166 aa).

Catalysis depends on residues arginine 92, glutamate 95, and serine 118.

Belongs to the cyanase family.

The enzyme catalyses cyanate + hydrogencarbonate + 3 H(+) = NH4(+) + 2 CO2. Functionally, catalyzes the reaction of cyanate with bicarbonate to produce ammonia and carbon dioxide. This chain is Cyanate hydratase, found in Zea mays (Maize).